The following is a 540-amino-acid chain: 2-succinyl-5-enolpyruvyl-6-hydroxy-3-cyclohexene-1-carboxylate synthase (540 aa).

Belongs to the TPP enzyme family. MenD subfamily. Homodimer. Requires Mg(2+) as cofactor. It depends on Mn(2+) as a cofactor. The cofactor is thiamine diphosphate.

The catalysed reaction is isochorismate + 2-oxoglutarate + H(+) = 5-enolpyruvoyl-6-hydroxy-2-succinyl-cyclohex-3-ene-1-carboxylate + CO2. The protein operates within quinol/quinone metabolism; 1,4-dihydroxy-2-naphthoate biosynthesis; 1,4-dihydroxy-2-naphthoate from chorismate: step 2/7. Its pathway is quinol/quinone metabolism; menaquinone biosynthesis. Functionally, catalyzes the thiamine diphosphate-dependent decarboxylation of 2-oxoglutarate and the subsequent addition of the resulting succinic semialdehyde-thiamine pyrophosphate anion to isochorismate to yield 2-succinyl-5-enolpyruvyl-6-hydroxy-3-cyclohexene-1-carboxylate (SEPHCHC). The protein is 2-succinyl-5-enolpyruvyl-6-hydroxy-3-cyclohexene-1-carboxylate synthase of Mycobacteroides abscessus (strain ATCC 19977 / DSM 44196 / CCUG 20993 / CIP 104536 / JCM 13569 / NCTC 13031 / TMC 1543 / L948) (Mycobacterium abscessus).